A 713-amino-acid polypeptide reads, in one-letter code: Serine/threonine-protein kinase SSN3 (713 aa).

Residues tyrosine 66–phenylalanine 484 form the Protein kinase domain. Leucine 72 to valine 80 is a binding site for ATP. A compositionally biased stretch (low complexity) spans asparagine 104–threonine 120. Residues asparagine 104–serine 188 are disordered. Polar residues predominate over residues glutamine 129–histidine 142. The span at glycine 158–alanine 175 shows a compositional bias: low complexity. Lysine 201 is an ATP binding site. The active-site Proton acceptor is the aspartate 304. A compositionally biased stretch (polar residues) spans serine 657 to glutamate 672. Positions serine 657–asparagine 713 are disordered. Over residues serine 673 to proline 691 the composition is skewed to low complexity. A compositionally biased stretch (polar residues) spans arginine 694 to asparagine 705.

This sequence belongs to the protein kinase superfamily. CMGC Ser/Thr protein kinase family. CDC2/CDKX subfamily. In terms of assembly, component of the srb8-11 complex, a regulatory module of the Mediator complex. Mg(2+) is required as a cofactor.

It is found in the nucleus. It catalyses the reaction L-seryl-[protein] + ATP = O-phospho-L-seryl-[protein] + ADP + H(+). It carries out the reaction L-threonyl-[protein] + ATP = O-phospho-L-threonyl-[protein] + ADP + H(+). The enzyme catalyses [DNA-directed RNA polymerase] + ATP = phospho-[DNA-directed RNA polymerase] + ADP + H(+). In terms of biological role, component of the srb8-11 complex. The srb8-11 complex is a regulatory module of the Mediator complex which is itself dependent transcription. The srb8-11 complex may be involved in the transcriptional repression of a subset of genes regulated by Mediator. It may inhibit the association of the Mediator complex with RNA polymerase II to form the holoenzyme complex. The srb8-11 complex phosphorylates the C-terminal domain (CTD) of the largest subunit of RNA polymerase II. The sequence is that of Serine/threonine-protein kinase SSN3 (SSN3) from Mycosarcoma maydis (Corn smut fungus).